The sequence spans 70 residues: MNLIAAAIAIGLGALGAGIGNGLIVSRTVEGIARQPEAGKELRTLMFMGIALVEALPIIAVVIAFLAFFG.

The next 2 helical transmembrane spans lie at I4–I24 and G49–F69.

It belongs to the ATPase C chain family. In terms of assembly, F-type ATPases have 2 components, F(1) - the catalytic core - and F(0) - the membrane proton channel. F(1) has five subunits: alpha(3), beta(3), gamma(1), delta(1), epsilon(1). F(0) has three main subunits: a(1), b(2) and c(10-14). The alpha and beta chains form an alternating ring which encloses part of the gamma chain. F(1) is attached to F(0) by a central stalk formed by the gamma and epsilon chains, while a peripheral stalk is formed by the delta and b chains. The F(1)F(0) complex interacts with SpoIIIJ and YqjG; YqgA is found in the same complex.

It localises to the cell membrane. Functionally, f(1)F(0) ATP synthase produces ATP from ADP in the presence of a proton or sodium gradient. F-type ATPases consist of two structural domains, F(1) containing the extramembraneous catalytic core and F(0) containing the membrane proton channel, linked together by a central stalk and a peripheral stalk. During catalysis, ATP synthesis in the catalytic domain of F(1) is coupled via a rotary mechanism of the central stalk subunits to proton translocation. Its function is as follows. Key component of the F(0) channel; it plays a direct role in translocation across the membrane. A homomeric c-ring of between 10-14 subunits forms the central stalk rotor element with the F(1) delta and epsilon subunits. This Bacillus subtilis (strain 168) protein is ATP synthase subunit c.